The primary structure comprises 89 residues: uncharacterized protein (89 aa).

Residues 1 to 89 form the HTH arsR-type domain; that stretch reads MEKYEKAAEI…KEIIKLVDEL (89 aa).

This is an uncharacterized protein from Methanocaldococcus jannaschii (strain ATCC 43067 / DSM 2661 / JAL-1 / JCM 10045 / NBRC 100440) (Methanococcus jannaschii).